The sequence spans 416 residues: Choline/ethanolaminephosphotransferase 1 (416 aa).

The segment at 1 to 20 (MSGHRSTRKRCGDSHPESPV) is disordered. Position 18 is a phosphoserine (S18). T40 is subject to Phosphothreonine. Position 86 (N86) interacts with CDP-choline. 2 helical membrane passes run 89-108 (TIIG…FYCP) and 116-133 (LWAY…QSLD). Mg(2+) is bound at residue D133. N144 is a glycosylation site (N-linked (GlcNAc...) asparagine). Residue E151 participates in CDP-choline binding. Mg(2+) is bound at residue D154. Residue H155 is the Proton acceptor of the active site. 8 consecutive transmembrane segments (helical) span residues 156–176 (GCDS…VQLG), 180–199 (DWMF…AHWQ), 210–230 (IIDV…AVIG), 246–267 (MKLF…NYFR), 286–306 (VLSP…IYKK), 315–334 (HPCL…TNKL), 349–363 (TAFI…DQYF), and 368–388 (DEYI…IRYC). D158 contacts Mg(2+).

Belongs to the CDP-alcohol phosphatidyltransferase class-I family. Homodimer. It depends on Mg(2+) as a cofactor. Requires Mn(2+) as cofactor.

Its subcellular location is the endoplasmic reticulum membrane. It localises to the nucleus membrane. It catalyses the reaction CDP-ethanolamine + a 1,2-diacyl-sn-glycerol = a 1,2-diacyl-sn-glycero-3-phosphoethanolamine + CMP + H(+). The catalysed reaction is CDP-choline + a 1,2-diacyl-sn-glycerol = a 1,2-diacyl-sn-glycero-3-phosphocholine + CMP + H(+). It carries out the reaction 1-O-alkyl-2-acyl-sn-glycerol + CDP-choline = a 1-O-alkyl-2-acyl-sn-glycero-3-phosphocholine + CMP + H(+). The enzyme catalyses a 1-O-(1Z-alkenyl)-2-acyl-sn-glycerol + CDP-choline = a 1-O-(1Z-alkenyl)-2-acyl-sn-glycero-3-phosphocholine + CMP + H(+). It catalyses the reaction 1,2-dioctanoyl-sn-glycerol + CDP-choline = 1,2-dioctanoyl-sn-glycero-3-phosphocholine + CMP + H(+). The catalysed reaction is 1,2-didecanoyl-sn-glycerol + CDP-choline = 1,2-didecanoyl-sn-glycero-3-phosphocholine + CMP + H(+). It carries out the reaction CDP-choline + 1,2-di-(9Z-octadecenoyl)-sn-glycerol = 1,2-di-(9Z-octadecenoyl)-sn-glycero-3-phosphocholine + CMP + H(+). The enzyme catalyses 1-hexadecanoyl-2-(9Z-octadecenoyl)-sn-glycerol + CDP-choline = 1-hexadecanoyl-2-(9Z-octadecenoyl)-sn-glycero-3-phosphocholine + CMP + H(+). It catalyses the reaction CDP-ethanolamine + 1,2-di-(9Z-octadecenoyl)-sn-glycerol = 1,2-di-(9Z-octadecenoyl)-sn-glycero-3-phosphoethanolamine + CMP + H(+). The catalysed reaction is 1-hexadecanoyl-2-(9Z-octadecenoyl)-sn-glycerol + CDP-ethanolamine = 1-hexadecanoyl-2-(9Z-octadecenoyl)-sn-glycero-3-phosphoethanolamine + CMP + H(+). It carries out the reaction 1-hexadecanoyl-2-(4Z,7Z,10Z,13Z,16Z,19Z-docosahexaenoyl)-sn-glycerol + CDP-choline = 1-hexadecanoyl-2-(4Z,7Z,10Z,13Z,16Z,19Z-docosahexaenoyl)-sn-glycero-3-phosphocholine + CMP + H(+). The enzyme catalyses 1,2-di-(9Z-hexadecenoyl)-sn-glycerol + CDP-choline = 1,2-di-(9Z-hexadecenoyl)-sn-glycero-3-phosphocholine + CMP + H(+). It catalyses the reaction 1,2-di-(9Z-hexadecenoyl)-sn-glycerol + CDP-ethanolamine = 1,2-di-(9Z-hexadecenoyl)-sn-glycero-3-phosphoethanolamine + CMP + H(+). The catalysed reaction is 1-O-hexadecyl-2-acetyl-sn-glycerol + CDP-choline = 1-O-hexadecyl-2-acetyl-sn-glycero-3-phosphocholine + CMP + H(+). It carries out the reaction 1-O-hexadecyl-2-(5Z,8Z,11Z,14Z-eicosatetraenoyl)-sn-glycerol + CDP-choline = 1-O-hexadecyl-2-(5Z,8Z,11Z,14Z)-eicosatetraenoyl-sn-glycero-3-phosphocholine + CMP + H(+). It functions in the pathway phospholipid metabolism; phosphatidylethanolamine biosynthesis; phosphatidylethanolamine from ethanolamine: step 3/3. It participates in phospholipid metabolism; phosphatidylcholine biosynthesis; phosphatidylcholine from phosphocholine: step 2/2. In terms of biological role, catalyzes both phosphatidylcholine and phosphatidylethanolamine biosynthesis from CDP-choline and CDP-ethanolamine, respectively. Involved in protein-dependent process of phospholipid transport to distribute phosphatidyl choline to the lumenal surface. Has a higher cholinephosphotransferase activity than ethanolaminephosphotransferase activity. The chain is Choline/ethanolaminephosphotransferase 1 from Rattus norvegicus (Rat).